The sequence spans 275 residues: Large ribosomal subunit protein uL2 (275 aa).

Disordered stretches follow at residues 222–243 (GSVM…PIGR) and 256–275 (GGKT…KRKP).

This sequence belongs to the universal ribosomal protein uL2 family. In terms of assembly, part of the 50S ribosomal subunit. Forms a bridge to the 30S subunit in the 70S ribosome.

One of the primary rRNA binding proteins. Required for association of the 30S and 50S subunits to form the 70S ribosome, for tRNA binding and peptide bond formation. It has been suggested to have peptidyltransferase activity; this is somewhat controversial. Makes several contacts with the 16S rRNA in the 70S ribosome. The sequence is that of Large ribosomal subunit protein uL2 from Syntrophomonas wolfei subsp. wolfei (strain DSM 2245B / Goettingen).